The chain runs to 255 residues: 4-hydroxy-tetrahydrodipicolinate reductase (255 aa).

NAD(+) contacts are provided by residues 9 to 14, 89 to 91, and 115 to 118; these read GFKGKM, GTT, and APNF. Residue His-145 is the Proton donor/acceptor of the active site. His-146 is a binding site for (S)-2,3,4,5-tetrahydrodipicolinate. The Proton donor role is filled by Lys-149. 155 to 156 serves as a coordination point for (S)-2,3,4,5-tetrahydrodipicolinate; it reads GT.

This sequence belongs to the DapB family.

Its subcellular location is the cytoplasm. It catalyses the reaction (S)-2,3,4,5-tetrahydrodipicolinate + NAD(+) + H2O = (2S,4S)-4-hydroxy-2,3,4,5-tetrahydrodipicolinate + NADH + H(+). It carries out the reaction (S)-2,3,4,5-tetrahydrodipicolinate + NADP(+) + H2O = (2S,4S)-4-hydroxy-2,3,4,5-tetrahydrodipicolinate + NADPH + H(+). It functions in the pathway amino-acid biosynthesis; L-lysine biosynthesis via DAP pathway; (S)-tetrahydrodipicolinate from L-aspartate: step 4/4. Catalyzes the conversion of 4-hydroxy-tetrahydrodipicolinate (HTPA) to tetrahydrodipicolinate. The sequence is that of 4-hydroxy-tetrahydrodipicolinate reductase from Streptococcus suis (strain 98HAH33).